Reading from the N-terminus, the 124-residue chain is Small ribosomal subunit protein uS12 (124 aa).

Belongs to the universal ribosomal protein uS12 family. In terms of assembly, part of the 30S ribosomal subunit. Contacts proteins S8 and S17. May interact with IF1 in the 30S initiation complex.

Functionally, with S4 and S5 plays an important role in translational accuracy. Its function is as follows. Interacts with and stabilizes bases of the 16S rRNA that are involved in tRNA selection in the A site and with the mRNA backbone. Located at the interface of the 30S and 50S subunits, it traverses the body of the 30S subunit contacting proteins on the other side and probably holding the rRNA structure together. The combined cluster of proteins S8, S12 and S17 appears to hold together the shoulder and platform of the 30S subunit. The protein is Small ribosomal subunit protein uS12 of Photorhabdus laumondii subsp. laumondii (strain DSM 15139 / CIP 105565 / TT01) (Photorhabdus luminescens subsp. laumondii).